The sequence spans 428 residues: Stromal membrane-associated protein 2 (428 aa).

An Arf-GAP domain is found at 13-139 (QAVLGSLLSE…INTFRKEKDD (127 aa)). A C4-type zinc finger spans residues 28–51 (CADCQAKGPRWASWNIGVFICIRC). The span at 161 to 172 (VKMPQKKEETQQ) shows a compositional bias: basic and acidic residues. Disordered regions lie at residues 161–182 (VKMP…KSTE) and 222–258 (SRKV…AGKK).

May interact with clathrin heavy chains.

Functionally, GTPase activating protein. May play a role in clathrin-dependent retrograde transport from early endosomes to the trans-Golgi network. The protein is Stromal membrane-associated protein 2 (SMAP2) of Gallus gallus (Chicken).